Reading from the N-terminus, the 262-residue chain is MKIGTQNQAFFPENILEKFRYIKEMGFDGFEIDGKLLVNNIEEVKAAIKETGLPVTTACGGYDGWIGDFIEERRLNGLKQIERILEALAEVGGKGIVVPAAWGMFTFRLPPMTSPRSLDGDRKMVSDSLRVLEQVAARTGTVVYLEPLNRYQDHMINTLADARRYIVENDLKHVQIIGDFYHMNIEEDNLAQALHDNRDLLGHVHIADNHRYQPGSGTLDFHALFEQLRADNYQGYVVYEGRIRAEDPAQAYRDSLAWLRTC.

Glutamate 146 (proton donor/acceptor) is an active-site residue. 2 residues coordinate Mn(2+): glutamate 146 and aspartate 179. Histidine 182 provides a ligand contact to substrate. Residue histidine 205 coordinates Mn(2+). Residue arginine 211 participates in substrate binding. The active-site Proton donor/acceptor is glutamate 240. Glutamate 240 lines the Mn(2+) pocket.

Belongs to the hyi family. Mn(2+) serves as cofactor.

It catalyses the reaction a 3-dehydro-D-guloside = a 3-dehydro-D-glucoside. Functionally, catalyzes the epimerization at C4 of 3-dehydro-D-gulosides leading to 3-dehydro-D-glucosides. Probably functions in a metabolic pathway that transforms D-gulosides to D-glucosides. Can use methyl alpha-3-dehydro-D-glucoside and methyl beta-3-dehydro-D-glucoside as substrates in vitro. However, the actual specific physiological substrates for this metabolic pathway are unknown. Cannot act on D-psicose, D-fructose, D-tagatose, D-sorbose, L-xylulose, or L-ribulose. In Escherichia coli (strain K12), this protein is 3-dehydro-D-guloside 4-epimerase (ycjR).